The sequence spans 508 residues: Phenylacetaldehyde synthase (508 aa).

L-phenylalanine-binding residues include His-203 and His-318. Lys-319 carries the N6-(pyridoxal phosphate)lysine modification. L-phenylalanine is bound at residue Phe-348.

It belongs to the group II decarboxylase family. In terms of assembly, homotetramer. Requires pyridoxal 5'-phosphate as cofactor.

The catalysed reaction is L-phenylalanine + O2 + H2O + H(+) = 2-phenylacetaldehyde + H2O2 + NH4(+) + CO2. Its function is as follows. Bifunctional enzyme that catalyzes the decarboxylation of L-phenylalanine to produce 2-phenylethylamine, which is then oxidized to form 2-phenylacetaldehyde, a constituent of floral scent in petals. 2-phenylacetaldehyde is a precursor of 2-phenylethanol, another constituent of floral scent in petals. The protein is Phenylacetaldehyde synthase of Rosa hybrid cultivar.